A 285-amino-acid chain; its full sequence is Homeobox protein Hox-A13b (285 aa).

A DNA-binding region (homeobox) is located at residues 219–278 (GRKKRVPYTKVQLKELEREYAANKFITKDKRRRISAQTNLTERQVTIWFQNRRVKEKKVV).

This sequence belongs to the Abd-B homeobox family.

Its subcellular location is the nucleus. Sequence-specific transcription factor which is part of a developmental regulatory system that provides cells with specific positional identities on the anterior-posterior axis. The polypeptide is Homeobox protein Hox-A13b (hoxa13b) (Takifugu rubripes (Japanese pufferfish)).